The sequence spans 675 residues: MSDETTGSLGDAFSPMDTPTTTIMPPPADVDESGFSHSLLTFAAVMTFLIMIVGICGNLLTVVALLKCPKVRNVAAAFIISLCIADLLFCALVLPFQGLRFVQGTWRHGEVLCRLIPFIQYGNIGVSLLCIAMITINRYVMITHYSLYNRIYKRHWIAIMIAACWLFSYGMQLPTLLGAWGRFGYDARLQTCSIMSDRHGHSSKTTLFITAFVIPCLVIIACYAKIFWVVHKSEQRLKRHATKQNSIPNNLRPLAAATSMPSGDGANPSQVPAGCRVSSDSSSNYSTDVPDTTPGGAGGGAGVKQQPSRVKDQREVRAKRNEWRITKMVLAIFLSFVICYLPITIVKVADKDVEHPSLHIFSYIMLYLSACINPIIYVIMNKQYRKAYKTVVFCQPAARLLMPFGKGNGASSAAEKWKDTGLSNNHSRTIVSQMSAGATATATATAAAGTQPQSTSTQGPVQALELTARVPDLISKSSNLPLPQPLPQIPPAGARPSLTPPPPPSVLTATHSNGSGSQRLPLKKNNHSYTNSGFNSSVISANPSSSPSPSSSGGGIYRPGIGSMGNGSASIRRITMVGDDIILEEEELPPTPTASSPPQMQAPPPPPSSSRQTTMNALNTTPKTPIYMNVDSPKRNQSYSERNIPVPAREGHDQGVKDSQGLPSKLMDKKKFPKD.

Residues 1 to 44 (MSDETTGSLGDAFSPMDTPTTTIMPPPADVDESGFSHSLLTFAA) are Extracellular-facing. A helical transmembrane segment spans residues 45-65 (VMTFLIMIVGICGNLLTVVAL). The Cytoplasmic portion of the chain corresponds to 66–73 (LKCPKVRN). The chain crosses the membrane as a helical span at residues 74 to 94 (VAAAFIISLCIADLLFCALVL). Over 95–115 (PFQGLRFVQGTWRHGEVLCRL) the chain is Extracellular. A disulfide bond links C113 and C192. A helical transmembrane segment spans residues 116 to 136 (IPFIQYGNIGVSLLCIAMITI). Over 137–156 (NRYVMITHYSLYNRIYKRHW) the chain is Cytoplasmic. A helical transmembrane segment spans residues 157 to 177 (IAIMIAACWLFSYGMQLPTLL). The Extracellular segment spans residues 178–206 (GAWGRFGYDARLQTCSIMSDRHGHSSKTT). A helical transmembrane segment spans residues 207 to 227 (LFITAFVIPCLVIIACYAKIF). Topologically, residues 228–327 (WVVHKSEQRL…AKRNEWRITK (100 aa)) are cytoplasmic. Residues 258–316 (TSMPSGDGANPSQVPAGCRVSSDSSSNYSTDVPDTTPGGAGGGAGVKQQPSRVKDQREV) form a disordered region. Low complexity predominate over residues 278-294 (SSDSSSNYSTDVPDTTP). A helical membrane pass occupies residues 328–348 (MVLAIFLSFVICYLPITIVKV). The Extracellular portion of the chain corresponds to 349-359 (ADKDVEHPSLH). Residues 360–380 (IFSYIMLYLSACINPIIYVIM) form a helical membrane-spanning segment. At 381-675 (NKQYRKAYKT…LMDKKKFPKD (295 aa)) the chain is on the cytoplasmic side. Disordered stretches follow at residues 475–568 (SKSS…GNGS) and 588–675 (LPPT…FPKD). A compositionally biased stretch (low complexity) spans 536–551 (SSVISANPSSSPSPSS). Residues 552–565 (SGGGIYRPGIGSMG) are compositionally biased toward gly residues. Residues 666–675 (LMDKKKFPKD) are compositionally biased toward basic and acidic residues.

Belongs to the G-protein coupled receptor 1 family.

The protein localises to the cell membrane. In terms of biological role, required in glia to regulate the acute sensitivity to cocaine and to continuously maintain the proper blood-brain barrier (BBB) function. A moody-mediated signaling pathway functions in glia to regulate nervous system insulation and drug-related behaviors. This chain is G-protein coupled receptor moody, found in Drosophila pseudoobscura pseudoobscura (Fruit fly).